Reading from the N-terminus, the 146-residue chain is Small ribosomal subunit protein bS16 (146 aa).

Basic and acidic residues predominate over residues 84–102 (SHLEAQKAAVERLGRRKDY). The tract at residues 84 to 146 (SHLEAQKAAV…DAPAAEATTE (63 aa)) is disordered. The span at 110 to 119 (APKAAPVAEA) shows a compositional bias: low complexity. Positions 120 to 130 (PAEEAPAEEPA) are enriched in acidic residues. Low complexity predominate over residues 131-146 (AEASTDDAPAAEATTE).

It belongs to the bacterial ribosomal protein bS16 family.

This is Small ribosomal subunit protein bS16 from Rhodopirellula baltica (strain DSM 10527 / NCIMB 13988 / SH1).